Here is a 260-residue protein sequence, read N- to C-terminus: Segregation and condensation protein A (260 aa).

It belongs to the ScpA family. As to quaternary structure, component of a cohesin-like complex composed of ScpA, ScpB and the Smc homodimer, in which ScpA and ScpB bind to the head domain of Smc. The presence of the three proteins is required for the association of the complex with DNA.

The protein resides in the cytoplasm. Functionally, participates in chromosomal partition during cell division. May act via the formation of a condensin-like complex containing Smc and ScpB that pull DNA away from mid-cell into both cell halves. The chain is Segregation and condensation protein A from Halalkalibacterium halodurans (strain ATCC BAA-125 / DSM 18197 / FERM 7344 / JCM 9153 / C-125) (Bacillus halodurans).